The chain runs to 170 residues: Flavodoxin (170 aa).

One can recognise a Flavodoxin-like domain in the interval 4–165 (IGLFYGTQTG…RIKTWVSQLK (162 aa)).

This sequence belongs to the flavodoxin family. FMN is required as a cofactor.

Low-potential electron donor to a number of redox enzymes. The protein is Flavodoxin (isiB) of Synechococcus elongatus (strain ATCC 33912 / PCC 7942 / FACHB-805) (Anacystis nidulans R2).